A 350-amino-acid polypeptide reads, in one-letter code: Quinolinate phosphoribosyltransferase [decarboxylating] 1 (350 aa).

Substrate is bound by residues Arg-141, 172–174, Arg-196, Lys-206, Glu-239, Asp-266, 298–300, and 319–321; these read TRK, SGN, and SGA.

The protein belongs to the NadC/ModD family.

The enzyme catalyses nicotinate beta-D-ribonucleotide + CO2 + diphosphate = quinolinate + 5-phospho-alpha-D-ribose 1-diphosphate + 2 H(+). It functions in the pathway alkaloid biosynthesis; nicotine biosynthesis. Its pathway is cofactor biosynthesis; NAD(+) biosynthesis; nicotinate D-ribonucleotide from quinolinate: step 1/1. Involved in the biosynthesis of pyridine alkaloid natural products, leading mainly to the production of anabasine, anatabine, nicotine and nornicotine, effective deterrents against herbivores with antiparasitic and pesticide properties (neurotoxins); nornicotine serves as the precursor in the synthesis of the carcinogen compound N'-nitrosonornicotine (NNN). Involved in the catabolism of quinolinic acid (QA). This chain is Quinolinate phosphoribosyltransferase [decarboxylating] 1, found in Nicotiana glauca (Glaucous tobacco).